The following is a 160-amino-acid chain: SsrA-binding protein (160 aa).

Belongs to the SmpB family.

The protein localises to the cytoplasm. In terms of biological role, required for rescue of stalled ribosomes mediated by trans-translation. Binds to transfer-messenger RNA (tmRNA), required for stable association of tmRNA with ribosomes. tmRNA and SmpB together mimic tRNA shape, replacing the anticodon stem-loop with SmpB. tmRNA is encoded by the ssrA gene; the 2 termini fold to resemble tRNA(Ala) and it encodes a 'tag peptide', a short internal open reading frame. During trans-translation Ala-aminoacylated tmRNA acts like a tRNA, entering the A-site of stalled ribosomes, displacing the stalled mRNA. The ribosome then switches to translate the ORF on the tmRNA; the nascent peptide is terminated with the 'tag peptide' encoded by the tmRNA and targeted for degradation. The ribosome is freed to recommence translation, which seems to be the essential function of trans-translation. The protein is SsrA-binding protein of Escherichia coli O6:K15:H31 (strain 536 / UPEC).